The chain runs to 254 residues: Alcohol dehydrogenase (254 aa).

10–33 lines the NAD(+) pocket; sequence FVAGLGGIGLDTSREIVKSGPKNL. S138 contributes to the substrate binding site. Y151 serves as the catalytic Proton acceptor.

The protein belongs to the short-chain dehydrogenases/reductases (SDR) family. As to quaternary structure, homodimer.

It carries out the reaction a primary alcohol + NAD(+) = an aldehyde + NADH + H(+). The catalysed reaction is a secondary alcohol + NAD(+) = a ketone + NADH + H(+). This is Alcohol dehydrogenase (Adh) from Drosophila affinidisjuncta (Fruit fly).